The following is an 84-amino-acid chain: Exodeoxyribonuclease 7 small subunit (84 aa).

The protein belongs to the XseB family. As to quaternary structure, heterooligomer composed of large and small subunits.

The protein resides in the cytoplasm. The enzyme catalyses Exonucleolytic cleavage in either 5'- to 3'- or 3'- to 5'-direction to yield nucleoside 5'-phosphates.. Functionally, bidirectionally degrades single-stranded DNA into large acid-insoluble oligonucleotides, which are then degraded further into small acid-soluble oligonucleotides. The polypeptide is Exodeoxyribonuclease 7 small subunit (Azoarcus sp. (strain BH72)).